Reading from the N-terminus, the 94-residue chain is MAHKKGTGSTRNGRDSQSKRLGVKRYGGQVVRAGNILVRQRGTKFHPGNNVGRGSDDTLFALIDGVVKFEYKTRSRQKISVYPVPQEEPATVAG.

The segment at 1-25 (MAHKKGTGSTRNGRDSQSKRLGVKR) is disordered.

Belongs to the bacterial ribosomal protein bL27 family.

In Gloeothece citriformis (strain PCC 7424) (Cyanothece sp. (strain PCC 7424)), this protein is Large ribosomal subunit protein bL27.